The following is a 357-amino-acid chain: MKIFQNTKNVIVSIAWAAALCTSAVSAQTLTSNSTGTNNGFYYTFWKDSGDASMTLLSGGRYQSSWNSSTNNWVGGKGWNPGSSSRVISYSGYYGVDSSQNSYLALYGWTRSPLIEYYVIESYGSYNPASCSGGTDYGSFQSDGATYNVRRCQRVNQPSIDGNQTFYQYFSVRNPKKGFGNISGTITFANHANFWATKGLNLGNHNYQVLATEGYQSRGSSDITVSQGGSSGGGNSSSSSSASGGGSKIIVVRARGTAGGESITLRVGNTNVATWTLTTTMTNYTATTSASGGSLVQYTNDSGNRDVQVDYISVNGSIRQSEDQTYNTGVYQNGSCGGGNGRSEWLHCNGAIGYGDI.

An N-terminal signal peptide occupies residues 1–27; that stretch reads MKIFQNTKNVIVSIAWAAALCTSAVSA. Residues 29-226 form the GH11 domain; it reads TLTSNSTGTN…SRGSSDITVS (198 aa). The Nucleophile role is filled by Glu116. Glu213 functions as the Proton donor in the catalytic mechanism. The interval 220–245 is disordered; the sequence is SSDITVSQGGSSGGGNSSSSSSASGG.

It belongs to the glycosyl hydrolase 11 (cellulase G) family.

It localises to the secreted. It catalyses the reaction Endohydrolysis of (1-&gt;4)-beta-D-xylosidic linkages in xylans.. It participates in glycan degradation; xylan degradation. In terms of biological role, endo-acting xylanase which specifically cleaves internal linkages on the xylan backbone, releasing xylooligosaccharides. Is able to hydrolyze glucuronoxylan and the arabinoxylan from wheat. The sequence is that of Endo-1,4-beta-xylanase Xyn11B (xyn11B) from Cellvibrio japonicus (Pseudomonas fluorescens subsp. cellulosa).